The sequence spans 244 residues: Glucosamine-6-phosphate deaminase (244 aa).

Aspartate 67 functions as the Proton acceptor; for enolization step in the catalytic mechanism. Asparagine 136 (for ring-opening step) is an active-site residue. The Proton acceptor; for ring-opening step role is filled by histidine 138. Glutamate 143 (for ring-opening step) is an active-site residue.

Belongs to the glucosamine/galactosamine-6-phosphate isomerase family. NagB subfamily.

The catalysed reaction is alpha-D-glucosamine 6-phosphate + H2O = beta-D-fructose 6-phosphate + NH4(+). It participates in amino-sugar metabolism; N-acetylneuraminate degradation; D-fructose 6-phosphate from N-acetylneuraminate: step 5/5. Catalyzes the reversible isomerization-deamination of glucosamine 6-phosphate (GlcN6P) to form fructose 6-phosphate (Fru6P) and ammonium ion. In Clostridium botulinum (strain ATCC 19397 / Type A), this protein is Glucosamine-6-phosphate deaminase.